Consider the following 140-residue polypeptide: Endoribonuclease YbeY (140 aa).

Zn(2+)-binding residues include histidine 100, histidine 104, and histidine 110.

Belongs to the endoribonuclease YbeY family. Zn(2+) is required as a cofactor.

It localises to the cytoplasm. Its function is as follows. Single strand-specific metallo-endoribonuclease involved in late-stage 70S ribosome quality control and in maturation of the 3' terminus of the 16S rRNA. The polypeptide is Endoribonuclease YbeY (Helicobacter pylori (strain ATCC 700392 / 26695) (Campylobacter pylori)).